Here is a 216-residue protein sequence, read N- to C-terminus: FMN-dependent NADH:quinone oxidoreductase 2 (216 aa).

FMN is bound by residues S9, 15-17 (SVS), 96-99 (MYNF), and 140-143 (SRGG).

Belongs to the azoreductase type 1 family. As to quaternary structure, homodimer. The cofactor is FMN.

The catalysed reaction is 2 a quinone + NADH + H(+) = 2 a 1,4-benzosemiquinone + NAD(+). It carries out the reaction N,N-dimethyl-1,4-phenylenediamine + anthranilate + 2 NAD(+) = 2-(4-dimethylaminophenyl)diazenylbenzoate + 2 NADH + 2 H(+). Quinone reductase that provides resistance to thiol-specific stress caused by electrophilic quinones. Its function is as follows. Also exhibits azoreductase activity. Catalyzes the reductive cleavage of the azo bond in aromatic azo compounds to the corresponding amines. The polypeptide is FMN-dependent NADH:quinone oxidoreductase 2 (Xanthomonas axonopodis pv. citri (strain 306)).